Here is a 562-residue protein sequence, read N- to C-terminus: Scaffold protein FimL (562 aa).

Interacts with PilG and FimV.

Its subcellular location is the cytoplasm. Functionally, regulates multiple virulence functions including type IV pilus (T4P)-mediated assembly and twitching motility as well as cAMP-dependent virulence gene expression. Regulates intracellular cyclic AMP (cAMP) levels through the activation of adenylate cyclase CyaB. Also functions as a scaffold linking FimV and PilG at the pole, where type IV pilus (T4P), the Chp chemosensory system and the CyaB adenylate cyclase interact. The protein is Scaffold protein FimL (fimL) of Pseudomonas aeruginosa (strain ATCC 15692 / DSM 22644 / CIP 104116 / JCM 14847 / LMG 12228 / 1C / PRS 101 / PAO1).